Consider the following 538-residue polypeptide: MSQISRTQSIMATTAQEHLETGGRINWLASLNTAFTPARNFRRTSIICTIGPKTNSVEALNKLRDAGLNVARMNFSHGSYEYHQSVIDNVRASVAAHPGRPVAIALDTKGPEIRTGNTAGDVDIPISAGTVMNFTTDEKYATACDTQNMYVDYKNITKVIQPGRVIYVDDGVLAFDVLSIKDDQTVEVRARNNGFISSRKGVNLPNTDVDLPALSEKDKADLRFGVKNNVDMVFASFIRRAQDIKDIRDVLGPEGKQIQIIAKIENRQGLNNFAEILEETDGVMVARGDLGIEIPAAEVFAAQKKMIAMCNIAGKPVICATQMLESMIKNPRPTRAEISDVGNAVTDGADCVMLSGETAKGNYPAESIHEMHEASLKAENTIPYVSHFEEMCTLVKRPVSTVESCAMAAVRASLDLGAGGIIVLSTSGDSARLLSKYRPVCPIFMVTRNPTTSRFSHLYRGVYPFLYPEQKPDFDTVNWQEDVDKRIKWAVTRAIELKTLTAGDTVVVVQGWKGGMGNTNTLRIVRADPDHLGIGQME.

S45 carries the phosphoserine modification. Residue R72 coordinates substrate. The K(+) site is built by N74, S76, D107, and T108. Residue 74–77 (NFSH) coordinates ATP. ATP-binding residues include R114 and K200. E265 serves as a coordination point for Mg(2+). G288, D289, and T321 together coordinate substrate. D289 lines the Mg(2+) pocket.

Belongs to the pyruvate kinase family. In terms of assembly, homotetramer. It depends on Mg(2+) as a cofactor. The cofactor is K(+).

It carries out the reaction pyruvate + ATP = phosphoenolpyruvate + ADP + H(+). It functions in the pathway carbohydrate degradation; glycolysis; pyruvate from D-glyceraldehyde 3-phosphate: step 5/5. In Hypocrea jecorina (Trichoderma reesei), this protein is Pyruvate kinase (pki1).